The following is a 334-amino-acid chain: Fructose-1,6-bisphosphatase class 1 (334 aa).

Residues Glu-91, Asp-113, Leu-115, and Asp-116 each contribute to the Mg(2+) site. Substrate-binding positions include 116–119 (DGSS), Asn-208, and Lys-274. Glu-280 is a Mg(2+) binding site.

This sequence belongs to the FBPase class 1 family. Homotetramer. Mg(2+) is required as a cofactor.

It is found in the cytoplasm. It carries out the reaction beta-D-fructose 1,6-bisphosphate + H2O = beta-D-fructose 6-phosphate + phosphate. Its pathway is carbohydrate biosynthesis; gluconeogenesis. In Janthinobacterium sp. (strain Marseille) (Minibacterium massiliensis), this protein is Fructose-1,6-bisphosphatase class 1.